The following is a 302-amino-acid chain: Citrate lyase subunit beta (302 aa).

2 residues coordinate substrate: R76 and E139. Positions 139 and 166 each coordinate Mg(2+).

Belongs to the HpcH/HpaI aldolase family. Citrate lyase beta subunit subfamily. In terms of assembly, oligomer with a subunit composition of (alpha,beta,gamma)6. It depends on Mg(2+) as a cofactor.

It localises to the cytoplasm. It catalyses the reaction citrate = oxaloacetate + acetate. The enzyme catalyses (3S)-citryl-CoA = oxaloacetate + acetyl-CoA. Represents a citryl-ACP lyase. In Escherichia coli O6:H1 (strain CFT073 / ATCC 700928 / UPEC), this protein is Citrate lyase subunit beta (citE).